The following is a 269-amino-acid chain: MQAWVIGNWKQNPATSHDVNALLDDLCAAISTTKQMSHDNSARCQIMVAPSFIHLAAVNGRLKDTSILCAAQDVSGHSASVGAYTGDCSAQQIVDAGATWTILGHSERRQYHQESNDTLLQKMIHALSQDLGVVFCIGESQAQYDTKQTLEVIDNQLAVIKEFITQQPELIKALPTRLIIAYEPVWAIGTGKVPTVAEVSATHKHIKQILAGFADSLSNMTVLYGGSVNADNANSFAADPMIDGALVGGASLKADSFLTIATAFSQASI.

8 to 10 (NWK) provides a ligand contact to substrate. Histidine 105 functions as the Electrophile in the catalytic mechanism. Glutamate 183 (proton acceptor) is an active-site residue. Substrate is bound by residues glycine 189, serine 227, and 248-249 (GG).

It belongs to the triosephosphate isomerase family. Homodimer.

The protein localises to the cytoplasm. It catalyses the reaction D-glyceraldehyde 3-phosphate = dihydroxyacetone phosphate. It participates in carbohydrate biosynthesis; gluconeogenesis. Its pathway is carbohydrate degradation; glycolysis; D-glyceraldehyde 3-phosphate from glycerone phosphate: step 1/1. Involved in the gluconeogenesis. Catalyzes stereospecifically the conversion of dihydroxyacetone phosphate (DHAP) to D-glyceraldehyde-3-phosphate (G3P). The protein is Triosephosphate isomerase of Psychrobacter cryohalolentis (strain ATCC BAA-1226 / DSM 17306 / VKM B-2378 / K5).